The sequence spans 361 residues: Sensor protein VanSC (361 aa).

2 consecutive transmembrane segments (helical) span residues 16–36 (FVTT…IRFI) and 59–79 (WLFC…IYYM). The 216-residue stretch at 144-359 (YLAHDLRTPL…IFNVRLPKPA (216 aa)) folds into the Histidine kinase domain. At H147 the chain carries Phosphohistidine; by autocatalysis. E252 is a binding site for Mg(2+).

In terms of processing, autophosphorylated.

It is found in the membrane. It carries out the reaction ATP + protein L-histidine = ADP + protein N-phospho-L-histidine.. The chain is Sensor protein VanSC from Enterococcus gallinarum.